The sequence spans 237 residues: Ribonuclease PH (237 aa).

Phosphate-binding positions include Arg86 and 124 to 126; that span reads GTR.

This sequence belongs to the RNase PH family. Homohexameric ring arranged as a trimer of dimers.

The catalysed reaction is tRNA(n+1) + phosphate = tRNA(n) + a ribonucleoside 5'-diphosphate. In terms of biological role, phosphorolytic 3'-5' exoribonuclease that plays an important role in tRNA 3'-end maturation. Removes nucleotide residues following the 3'-CCA terminus of tRNAs; can also add nucleotides to the ends of RNA molecules by using nucleoside diphosphates as substrates, but this may not be physiologically important. Probably plays a role in initiation of 16S rRNA degradation (leading to ribosome degradation) during starvation. This is Ribonuclease PH from Myxococcus xanthus (strain DK1622).